A 170-amino-acid polypeptide reads, in one-letter code: MEKLEKLISTYENYPKAGVSFKDVIEIVQHPSIFRQLILEMAKSKIIKEAEALISIDARGFIFGSAISIQAAKPMIVARKPGKLPGELVTKKYSLEYGENSLSIQKKALKKYNSFAIIDDLLATGGTVNCVSELINNNNKKVVGLLVVAELSKFDGRSRFNFPVESSILF.

Belongs to the purine/pyrimidine phosphoribosyltransferase family. Homodimer.

It localises to the cytoplasm. It carries out the reaction AMP + diphosphate = 5-phospho-alpha-D-ribose 1-diphosphate + adenine. The protein operates within purine metabolism; AMP biosynthesis via salvage pathway; AMP from adenine: step 1/1. Functionally, catalyzes a salvage reaction resulting in the formation of AMP, that is energically less costly than de novo synthesis. The sequence is that of Adenine phosphoribosyltransferase from Prochlorococcus marinus (strain MIT 9312).